Consider the following 491-residue polypeptide: Ketol-acid reductoisomerase (NADP(+)) (491 aa).

A KARI N-terminal Rossmann domain is found at 15-208 (AQLGTCRFME…GGHRAGVLES (194 aa)). NADP(+) is bound by residues 45–48 (CGAQ), arginine 68, arginine 76, serine 78, and 108–110 (DKQ). Histidine 132 is an active-site residue. Glycine 158 contacts NADP(+). 2 consecutive KARI C-terminal knotted domains span residues 209 to 353 (SFVA…KEQE) and 354 to 486 (YFDK…MTAM). Residues aspartate 217, glutamate 221, glutamate 389, and glutamate 393 each contribute to the Mg(2+) site. Serine 414 serves as a coordination point for substrate.

It belongs to the ketol-acid reductoisomerase family. It depends on Mg(2+) as a cofactor.

The catalysed reaction is (2R)-2,3-dihydroxy-3-methylbutanoate + NADP(+) = (2S)-2-acetolactate + NADPH + H(+). It carries out the reaction (2R,3R)-2,3-dihydroxy-3-methylpentanoate + NADP(+) = (S)-2-ethyl-2-hydroxy-3-oxobutanoate + NADPH + H(+). The protein operates within amino-acid biosynthesis; L-isoleucine biosynthesis; L-isoleucine from 2-oxobutanoate: step 2/4. It functions in the pathway amino-acid biosynthesis; L-valine biosynthesis; L-valine from pyruvate: step 2/4. In terms of biological role, involved in the biosynthesis of branched-chain amino acids (BCAA). Catalyzes an alkyl-migration followed by a ketol-acid reduction of (S)-2-acetolactate (S2AL) to yield (R)-2,3-dihydroxy-isovalerate. In the isomerase reaction, S2AL is rearranged via a Mg-dependent methyl migration to produce 3-hydroxy-3-methyl-2-ketobutyrate (HMKB). In the reductase reaction, this 2-ketoacid undergoes a metal-dependent reduction by NADPH to yield (R)-2,3-dihydroxy-isovalerate. The protein is Ketol-acid reductoisomerase (NADP(+)) of Christiangramia forsetii (strain DSM 17595 / CGMCC 1.15422 / KT0803) (Gramella forsetii).